Reading from the N-terminus, the 154-residue chain is Small ribosomal subunit protein bS6 (154 aa).

The disordered stretch occupies residues Asp-97–Gly-154. Basic and acidic residues-rich tracts occupy residues Gln-105–Glu-124 and Asp-135–Gly-154.

Belongs to the bacterial ribosomal protein bS6 family.

In terms of biological role, binds together with bS18 to 16S ribosomal RNA. The chain is Small ribosomal subunit protein bS6 from Methylobacterium radiotolerans (strain ATCC 27329 / DSM 1819 / JCM 2831 / NBRC 15690 / NCIMB 10815 / 0-1).